A 565-amino-acid polypeptide reads, in one-letter code: Membrane protein insertase YidC (565 aa).

The next 6 helical transmembrane spans lie at 6–26 (VLLIFSWLTVATLLWMDWGKN), 348–368 (LMALIGQGLFWILSHLNSLLH), 370–390 (WGWAIVGLVVLLRIAMYPLSA), 437–457 (GGCFPILIQMPIFFALYWVLV), 479–499 (PYFILPLLNIVIMWATQKLTP), and 516–536 (PLIFGVMMAFVPSGLALYWVI).

This sequence belongs to the OXA1/ALB3/YidC family. Type 1 subfamily. In terms of assembly, interacts with the Sec translocase complex via SecD. Specifically interacts with transmembrane segments of nascent integral membrane proteins during membrane integration.

The protein localises to the cell inner membrane. Required for the insertion and/or proper folding and/or complex formation of integral membrane proteins into the membrane. Involved in integration of membrane proteins that insert both dependently and independently of the Sec translocase complex, as well as at least some lipoproteins. Aids folding of multispanning membrane proteins. This is Membrane protein insertase YidC from Xylella fastidiosa (strain 9a5c).